We begin with the raw amino-acid sequence, 132 residues long: Nickel-responsive regulator (132 aa).

His76, His87, His89, and Cys95 together coordinate Ni(2+).

This sequence belongs to the transcriptional regulatory CopG/NikR family. In terms of assembly, homotetramer. Ni(2+) serves as cofactor.

Functionally, transcriptional repressor of the nikABCDE operon. Is active in the presence of excessive concentrations of intracellular nickel. This chain is Nickel-responsive regulator, found in Klebsiella pneumoniae (strain 342).